Consider the following 794-residue polypeptide: uncharacterized protein (794 aa).

The first 22 residues, 1 to 22 (MKFKYGAIVFSGLLGVSAILAA), serve as a signal peptide directing secretion. Residue C23 is the site of N-palmitoyl cysteine attachment. A lipid anchor (S-diacylglycerol cysteine) is attached at C23. 2 stretches are compositionally biased toward polar residues: residues 182–200 (TSVQ…NNGV) and 245–261 (QMST…DANQ). Disordered stretches follow at residues 182–208 (TSVQ…KIDK), 222–261 (NKAK…DANQ), 474–529 (FKIK…GKNG), 566–594 (SAAK…TEQK), and 737–757 (KNEK…RGKQ). The segment covering 475–501 (KIKSSNKSKSSSSKSSTKAETGKTSGG) has biased composition (low complexity). Polar residues predominate over residues 511 to 526 (GAQNQGKKGEGAQNQG). The segment covering 567–576 (AAKKEDKKSG) has biased composition (basic and acidic residues). Over residues 577–593 (ESTTEQTQIQSKSVTEQ) the composition is skewed to polar residues. Residues 737 to 751 (KNEKKEGSDQKDSKS) are compositionally biased toward basic and acidic residues.

This sequence belongs to the MG185/MG260 family.

Its subcellular location is the cell membrane. This is an uncharacterized protein from Mycoplasma pneumoniae (strain ATCC 29342 / M129 / Subtype 1) (Mycoplasmoides pneumoniae).